The sequence spans 266 residues: Glucosamine-6-phosphate deaminase (266 aa).

Asp-72 serves as the catalytic Proton acceptor; for enolization step. Asp-141 acts as the For ring-opening step in catalysis. His-143 (proton acceptor; for ring-opening step) is an active-site residue. Residue Glu-148 is the For ring-opening step of the active site.

It belongs to the glucosamine/galactosamine-6-phosphate isomerase family. NagB subfamily. As to quaternary structure, homohexamer.

The enzyme catalyses alpha-D-glucosamine 6-phosphate + H2O = beta-D-fructose 6-phosphate + NH4(+). It participates in amino-sugar metabolism; N-acetylneuraminate degradation; D-fructose 6-phosphate from N-acetylneuraminate: step 5/5. Its activity is regulated as follows. Allosterically activated by N-acetylglucosamine 6-phosphate (GlcNAc6P). Catalyzes the reversible isomerization-deamination of glucosamine 6-phosphate (GlcN6P) to form fructose 6-phosphate (Fru6P) and ammonium ion. In Klebsiella pneumoniae (strain 342), this protein is Glucosamine-6-phosphate deaminase.